Here is a 369-residue protein sequence, read N- to C-terminus: Anhydro-N-acetylmuramic acid kinase (369 aa).

Residue 12–19 participates in ATP binding; sequence GTSMDGID.

The protein belongs to the anhydro-N-acetylmuramic acid kinase family.

It carries out the reaction 1,6-anhydro-N-acetyl-beta-muramate + ATP + H2O = N-acetyl-D-muramate 6-phosphate + ADP + H(+). It functions in the pathway amino-sugar metabolism; 1,6-anhydro-N-acetylmuramate degradation. Its pathway is cell wall biogenesis; peptidoglycan recycling. Catalyzes the specific phosphorylation of 1,6-anhydro-N-acetylmuramic acid (anhMurNAc) with the simultaneous cleavage of the 1,6-anhydro ring, generating MurNAc-6-P. Is required for the utilization of anhMurNAc either imported from the medium or derived from its own cell wall murein, and thus plays a role in cell wall recycling. In Shewanella sediminis (strain HAW-EB3), this protein is Anhydro-N-acetylmuramic acid kinase.